We begin with the raw amino-acid sequence, 899 residues long: Probable disease resistance protein RXW24L (899 aa).

Positions 13–50 (DRLSQEYDQFKGVEDQVTELKSNLNLLKSFLKDADAKK) form a coiled coil. The NB-ARC domain maps to 143 to 455 (LQERQREMRH…AEGISERRRY (313 aa)). An ATP-binding site is contributed by 189 to 196 (GMGGLGKT).

This sequence belongs to the disease resistance NB-LRR family.

Functionally, potential disease resistance protein. The protein is Probable disease resistance protein RXW24L (RXW24L) of Arabidopsis thaliana (Mouse-ear cress).